The following is a 104-amino-acid chain: Iron-sulfur cluster assembly protein CyaY (104 aa).

The protein belongs to the frataxin family.

In terms of biological role, involved in iron-sulfur (Fe-S) cluster assembly. May act as a regulator of Fe-S biogenesis. This Vibrio parahaemolyticus serotype O3:K6 (strain RIMD 2210633) protein is Iron-sulfur cluster assembly protein CyaY.